Reading from the N-terminus, the 262-residue chain is Hemin import ATP-binding protein HmuV (262 aa).

One can recognise an ABC transporter domain in the interval 1–247 (MRNLTLQRGR…ERIKQIFAFD (247 aa)). 31–38 (GPNGTGKS) lines the ATP pocket.

The protein belongs to the ABC transporter superfamily. Heme (hemin) importer (TC 3.A.1.14.5) family. The complex is composed of two ATP-binding proteins (HmuV), two transmembrane proteins (HmuU) and a solute-binding protein (HmuT).

Its subcellular location is the cell inner membrane. Its function is as follows. Part of the ABC transporter complex HmuTUV involved in hemin import. Responsible for energy coupling to the transport system. This chain is Hemin import ATP-binding protein HmuV, found in Plesiomonas shigelloides (Aeromonas shigelloides).